A 284-amino-acid polypeptide reads, in one-letter code: MDRTATASWEVMSRRGEQQQQLMMQAPASHNGGSGGGEPARSRWAPKPEQILILESIFNSGMVNPAKDETARIRRLLERFGAVRDANVFYWFQNRRSRSRRRARQLQQACGAALHQLPSAAAAAGAGGGGDYYHHHHQPSSSPFLMHGGGGGGVVTSTTAAPAVAASGHFLADEVDGGGDDDLFAISRQMGLMARHGGGDHHYSSYADSDATQLSYQPTGTIQVFINGVAYDVPSGGALDMAGTFGRDAMLVHSSGEVLPVDEHGVLINSLQMGECYYLVSKSI.

Residues 1-43 (MDRTATASWEVMSRRGEQQQQLMMQAPASHNGGSGGGEPARSR) form a disordered region. Positions 39-103 (PARSRWAPKP…NRRSRSRRRA (65 aa)) form a DNA-binding region, homeobox; WUS-type.

Belongs to the WUS homeobox family.

The protein resides in the nucleus. Functionally, transcription factor which may be involved in developmental processes. The chain is WUSCHEL-related homeobox 10 (WOX10) from Oryza sativa subsp. japonica (Rice).